The chain runs to 295 residues: Diaminopimelate epimerase (295 aa).

Substrate-binding residues include Asn13, Gln46, and Asn66. The Proton donor role is filled by Cys75. Substrate contacts are provided by residues 76 to 77, Asn162, Asn195, and 213 to 214; these read GN and ER. Cys222 acts as the Proton acceptor in catalysis. 223-224 lines the substrate pocket; sequence GT.

The protein belongs to the diaminopimelate epimerase family. As to quaternary structure, homodimer.

It is found in the cytoplasm. It carries out the reaction (2S,6S)-2,6-diaminopimelate = meso-2,6-diaminopimelate. Its pathway is amino-acid biosynthesis; L-lysine biosynthesis via DAP pathway; DL-2,6-diaminopimelate from LL-2,6-diaminopimelate: step 1/1. In terms of biological role, catalyzes the stereoinversion of LL-2,6-diaminopimelate (L,L-DAP) to meso-diaminopimelate (meso-DAP), a precursor of L-lysine and an essential component of the bacterial peptidoglycan. This Psychrobacter cryohalolentis (strain ATCC BAA-1226 / DSM 17306 / VKM B-2378 / K5) protein is Diaminopimelate epimerase.